The primary structure comprises 475 residues: Pregnancy-specific glycoprotein 22 (475 aa).

The first 35 residues, 1–35 (MEVSSELLSNGWTSWQRVLLTASLLTCWLLPITAG), serve as a signal peptide directing secretion. 3 consecutive Ig-like V-type domains span residues 44–140 (KLVE…FLQV), 162–260 (PASV…YLQV), and 280–380 (PVPP…QVNV). N-linked (GlcNAc...) asparagine glycans are attached at residues Asn103, Asn110, and Asn231. One can recognise an Ig-like C2-type domain in the interval 387–471 (PVMRVTDSTV…SKTSLPVRLT (85 aa)). Cys406 and Cys454 are disulfide-bonded.

This sequence belongs to the immunoglobulin superfamily. CEA family.

The protein resides in the secreted. Its function is as follows. May have an angiogenic function during early placental development. Binds to cell-surface heparan sulfate proteoglycans (HSPGs), and stimulates secretion of the proangiogenic factors VEGFA and TGFB from uterine dendritic cells and natural killer cells. Also induces endothelial tube formation in vitro. In Mus musculus (Mouse), this protein is Pregnancy-specific glycoprotein 22.